Here is a 121-residue protein sequence, read N- to C-terminus: uncharacterized protein (121 aa).

Alanine 77–threonine 84 is a binding site for ATP.

This is an uncharacterized protein from Saccharomyces cerevisiae (strain ATCC 204508 / S288c) (Baker's yeast).